The primary structure comprises 579 residues: CTP synthase (579 aa).

The region spanning 310 to 558 is the Glutamine amidotransferase type-1 domain; the sequence is YVELHDAYLS…VAAAIGCLDQ (249 aa). Residues Cys402, His531, and Glu533 each act as for GATase activity in the active site.

It belongs to the CTP synthase family.

It carries out the reaction UTP + L-glutamine + ATP + H2O = CTP + L-glutamate + ADP + phosphate + 2 H(+). Its pathway is pyrimidine metabolism; CTP biosynthesis via de novo pathway; CTP from UDP: step 2/2. Catalyzes the ATP-dependent amination of UTP to CTP with either L-glutamine or ammonia as the source of nitrogen. The chain is CTP synthase (pyr-7) from Neurospora crassa (strain ATCC 24698 / 74-OR23-1A / CBS 708.71 / DSM 1257 / FGSC 987).